Here is a 274-residue protein sequence, read N- to C-terminus: Rhamnulose-1-phosphate aldolase (274 aa).

The active site involves Glu-117. Zn(2+)-binding residues include His-141, His-143, and His-212.

It belongs to the aldolase class II family. RhaD subfamily. Homotetramer. Zn(2+) is required as a cofactor.

The protein localises to the cytoplasm. The catalysed reaction is L-rhamnulose 1-phosphate = (S)-lactaldehyde + dihydroxyacetone phosphate. The protein operates within carbohydrate degradation; L-rhamnose degradation; glycerone phosphate from L-rhamnose: step 3/3. Its function is as follows. Catalyzes the reversible cleavage of L-rhamnulose-1-phosphate to dihydroxyacetone phosphate (DHAP) and L-lactaldehyde. The protein is Rhamnulose-1-phosphate aldolase of Escherichia coli (strain SE11).